The sequence spans 331 residues: uncharacterized protein (331 aa).

Pentapeptide repeat domains lie at 50–89 (ENLQ…RLGH), 90–129 (CQMN…NFKG), 140–179 (ANLR…NLQE), 185–224 (ANLR…KLTG), and 230–269 (TNLS…NLTQ).

This is an uncharacterized protein from Synechocystis sp. (strain ATCC 27184 / PCC 6803 / Kazusa).